Reading from the N-terminus, the 21-residue chain is Alpha-fibrinogenase A1 (21 aa).

It belongs to the peptidase S1 family. Snake venom subfamily. In terms of assembly, monomer. As to expression, expressed by the venom gland.

It is found in the secreted. Inhibited by PMSF, bovine aprotinin (APR), and soybean trypsin inhibitor (STI). Is not inhibited by EDTA, beta-mercaptoethanol, and high temperature (85 degrees Celsius). Functionally, snake venom serine protease that completely cleaves fibrinogen Aalpha chain (FGA), partially cleaves Bbeta chain (FGB) and has no activity on gamma chain. Is more potent that A2 and A3 alpha-fibrinogenases. Very active within 5 minutes. The chain is Alpha-fibrinogenase A1 from Crotalus atrox (Western diamondback rattlesnake).